Consider the following 51-residue polypeptide: Large ribosomal subunit protein eL39 (51 aa).

It belongs to the eukaryotic ribosomal protein eL39 family.

The polypeptide is Large ribosomal subunit protein eL39 (Methanosarcina acetivorans (strain ATCC 35395 / DSM 2834 / JCM 12185 / C2A)).